The following is a 616-amino-acid chain: tRNA 5-methylaminomethyl-2-thiouridine biosynthesis bifunctional protein MnmC (616 aa).

The tRNA (mnm(5)s(2)U34)-methyltransferase stretch occupies residues 1 to 232 (MLRTIVPARL…KRHCMSARFA (232 aa)). The interval 249–616 (IGGGVAGAAA…ARFAGNRKTA (368 aa)) is FAD-dependent cmnm(5)s(2)U34 oxidoreductase.

This sequence in the N-terminal section; belongs to the methyltransferase superfamily. tRNA (mnm(5)s(2)U34)-methyltransferase family. The protein in the C-terminal section; belongs to the DAO family. Requires FAD as cofactor.

It is found in the cytoplasm. It catalyses the reaction 5-aminomethyl-2-thiouridine(34) in tRNA + S-adenosyl-L-methionine = 5-methylaminomethyl-2-thiouridine(34) in tRNA + S-adenosyl-L-homocysteine + H(+). Its function is as follows. Catalyzes the last two steps in the biosynthesis of 5-methylaminomethyl-2-thiouridine (mnm(5)s(2)U) at the wobble position (U34) in tRNA. Catalyzes the FAD-dependent demodification of cmnm(5)s(2)U34 to nm(5)s(2)U34, followed by the transfer of a methyl group from S-adenosyl-L-methionine to nm(5)s(2)U34, to form mnm(5)s(2)U34. The chain is tRNA 5-methylaminomethyl-2-thiouridine biosynthesis bifunctional protein MnmC from Thiobacillus denitrificans (strain ATCC 25259 / T1).